We begin with the raw amino-acid sequence, 174 residues long: Protein C (174 aa).

This sequence belongs to the morbillivirus protein C family.

The sequence is that of Protein C (P/V/C) from Canine distemper virus (strain Onderstepoort) (CDV).